The following is a 1145-amino-acid chain: DNA polymerase II large subunit (1145 aa).

The tract at residues 284 to 303 (KSSSESDEDEETDGKPKIKP) is disordered.

This sequence belongs to the archaeal DNA polymerase II family. As to quaternary structure, heterodimer of a large subunit and a small subunit.

The catalysed reaction is DNA(n) + a 2'-deoxyribonucleoside 5'-triphosphate = DNA(n+1) + diphosphate. It carries out the reaction Exonucleolytic cleavage in the 3'- to 5'-direction to yield nucleoside 5'-phosphates.. Its function is as follows. Possesses two activities: a DNA synthesis (polymerase) and an exonucleolytic activity that degrades single-stranded DNA in the 3'- to 5'-direction. Has a template-primer preference which is characteristic of a replicative DNA polymerase. The sequence is that of DNA polymerase II large subunit from Methanococcoides burtonii (strain DSM 6242 / NBRC 107633 / OCM 468 / ACE-M).